The sequence spans 139 residues: Large ribosomal subunit protein uL16 (139 aa).

Belongs to the universal ribosomal protein uL16 family. Part of the 50S ribosomal subunit.

Binds 23S rRNA and is also seen to make contacts with the A and possibly P site tRNAs. This Crocosphaera subtropica (strain ATCC 51142 / BH68) (Cyanothece sp. (strain ATCC 51142)) protein is Large ribosomal subunit protein uL16.